The sequence spans 636 residues: Probable potassium transport system protein Kup (636 aa).

Transmembrane regions (helical) follow at residues 22-42 (VGLLVAAVGVVYGDIGTSPLY), 64-84 (ILSLILWSLLWVVSFKYVMFI), 115-135 (LMVICGLIGASLFYGDSMITP), 150-170 (FDGIDHWVVPISLVVLVALFL), 182-202 (LFGPIMVTWFVALGALGVHGI), 220-240 (FFVVHPGIGVAILGAVVLALT), 261-281 (WFILVLPALVLNYFGQGALLL), 293-313 (LLAPGWALLPLVGLATMATVI), 351-371 (IYIGAVNWTLMVGVVLLVIGF), 383-403 (VAVTGTMLMTTILVSAVMLLL), 408-428 (PLLAVPILVGFLFVDGLFFAA), and 433-453 (IVQGGAFPVLAGGVLYLLMST).

This sequence belongs to the HAK/KUP transporter (TC 2.A.72) family.

Its subcellular location is the cell inner membrane. The enzyme catalyses K(+)(in) + H(+)(in) = K(+)(out) + H(+)(out). Functionally, transport of potassium into the cell. Likely operates as a K(+):H(+) symporter. The protein is Probable potassium transport system protein Kup of Pseudomonas putida (strain ATCC 700007 / DSM 6899 / JCM 31910 / BCRC 17059 / LMG 24140 / F1).